A 609-amino-acid polypeptide reads, in one-letter code: Elongation factor 4 (609 aa).

Residues 11–193 form the tr-type G domain; sequence ERIRNFSIIA…QIVEKIPAPS (183 aa). GTP-binding positions include 23–28 and 140–143; these read DHGKST and NKID.

It belongs to the TRAFAC class translation factor GTPase superfamily. Classic translation factor GTPase family. LepA subfamily.

Its subcellular location is the cell membrane. The catalysed reaction is GTP + H2O = GDP + phosphate + H(+). Its function is as follows. Required for accurate and efficient protein synthesis under certain stress conditions. May act as a fidelity factor of the translation reaction, by catalyzing a one-codon backward translocation of tRNAs on improperly translocated ribosomes. Back-translocation proceeds from a post-translocation (POST) complex to a pre-translocation (PRE) complex, thus giving elongation factor G a second chance to translocate the tRNAs correctly. Binds to ribosomes in a GTP-dependent manner. The chain is Elongation factor 4 from Geobacillus thermodenitrificans (strain NG80-2).